Here is a 348-residue protein sequence, read N- to C-terminus: Dihydroorotase (348 aa).

Residues His-17 and His-19 each contribute to the Zn(2+) site. Residues 19-21 (HLR) and Asn-45 contribute to the substrate site. Residues Lys-103, His-140, and His-178 each coordinate Zn(2+). Lys-103 is modified (N6-carboxylysine). Residue His-140 coordinates substrate. Leu-223 contacts substrate. Residue Asp-251 coordinates Zn(2+). Asp-251 is a catalytic residue. Substrate-binding residues include His-255 and Ala-267.

This sequence belongs to the metallo-dependent hydrolases superfamily. DHOase family. Class II DHOase subfamily. Homodimer. Zn(2+) is required as a cofactor.

It catalyses the reaction (S)-dihydroorotate + H2O = N-carbamoyl-L-aspartate + H(+). The protein operates within pyrimidine metabolism; UMP biosynthesis via de novo pathway; (S)-dihydroorotate from bicarbonate: step 3/3. Functionally, catalyzes the reversible cyclization of carbamoyl aspartate to dihydroorotate. The chain is Dihydroorotase from Yersinia pestis.